Consider the following 248-residue polypeptide: Triosephosphate isomerase (248 aa).

9-11 (NWK) provides a ligand contact to substrate. Histidine 94 (electrophile) is an active-site residue. The active-site Proton acceptor is the glutamate 166. Substrate contacts are provided by residues glycine 172, serine 212, and 233–234 (GG).

This sequence belongs to the triosephosphate isomerase family. As to quaternary structure, homodimer.

It localises to the cytoplasm. It catalyses the reaction D-glyceraldehyde 3-phosphate = dihydroxyacetone phosphate. Its pathway is carbohydrate biosynthesis; gluconeogenesis. It participates in carbohydrate degradation; glycolysis; D-glyceraldehyde 3-phosphate from glycerone phosphate: step 1/1. In terms of biological role, involved in the gluconeogenesis. Catalyzes stereospecifically the conversion of dihydroxyacetone phosphate (DHAP) to D-glyceraldehyde-3-phosphate (G3P). This chain is Triosephosphate isomerase, found in Clostridium beijerinckii (strain ATCC 51743 / NCIMB 8052) (Clostridium acetobutylicum).